A 246-amino-acid chain; its full sequence is Orotidine 5'-phosphate decarboxylase (246 aa).

Substrate is bound by residues D22, K44, 71–80 (DLKYHDIPHT), T130, R191, Q201, G221, and R222. K73 functions as the Proton donor in the catalytic mechanism.

The protein belongs to the OMP decarboxylase family. Type 1 subfamily. In terms of assembly, homodimer.

It catalyses the reaction orotidine 5'-phosphate + H(+) = UMP + CO2. Its pathway is pyrimidine metabolism; UMP biosynthesis via de novo pathway; UMP from orotate: step 2/2. Its function is as follows. Catalyzes the decarboxylation of orotidine 5'-monophosphate (OMP) to uridine 5'-monophosphate (UMP). The polypeptide is Orotidine 5'-phosphate decarboxylase (Neisseria gonorrhoeae (strain ATCC 700825 / FA 1090)).